The chain runs to 74 residues: MKTSSLTIIFIAVIITIICLNIHDIEAREIEFNAGRVVRSEKDCIKHLQRCRENKDCCSKKCSRRGTNPEKRCR.

The N-terminal stretch at 1–27 (MKTSSLTIIFIAVIITIICLNIHDIEA) is a signal peptide. Positions 28–39 (REIEFNAGRVVR) are excised as a propeptide. 3 disulfides stabilise this stretch: C44–C58, C51–C62, and C57–C73. Residues 64–65 (RR) are essential for stimulation of [3H]ryanodine binding to RYR1.

As to expression, expressed by the venom gland.

The protein resides in the secreted. Its function is as follows. This toxin activates ryanodine receptors RyR1 and RyR2 by inducing a long-lasting subconductance state (35% of the full conductance stateon RyR1). Furthermore, it triggers calcium release from sarcoplasmic vesicles (11.8 nM are enough to induce a sharp release on RyR1, and 55% of the total calcium is released after toxin (100 nM) addition on RyR1) probably by acting as a cell-penetrating peptide (CPP). In addition, it has been shown to dose-dependently stimulate ryanodine binding to RyR1 (EC(50)=14.8 nM). It also augments the bell-shaped calcium-[3H]ryanodine binding curve that is maximal at about 10 uM calcium concentration. It binds a different site as ryanodine. It acts synergistically with caffeine. In vivo, intracerebroventricular injection into mice induces neurotoxic symptoms, followed by death. This Hoffmannihadrurus gertschi (Scorpion) protein is Hadrucalcin.